We begin with the raw amino-acid sequence, 230 residues long: Lipoprotein-releasing system ATP-binding protein LolD (230 aa).

One can recognise an ABC transporter domain in the interval 6–230 (LQVQAVSKSY…GYLQVPESAQ (225 aa)). 42–49 (GTSGSGKS) contributes to the ATP binding site.

This sequence belongs to the ABC transporter superfamily. Lipoprotein translocase (TC 3.A.1.125) family. In terms of assembly, the complex is composed of two ATP-binding proteins (LolD) and two transmembrane proteins (LolC and LolE).

It localises to the cell inner membrane. Functionally, part of the ABC transporter complex LolCDE involved in the translocation of mature outer membrane-directed lipoproteins, from the inner membrane to the periplasmic chaperone, LolA. Responsible for the formation of the LolA-lipoprotein complex in an ATP-dependent manner. The chain is Lipoprotein-releasing system ATP-binding protein LolD from Shewanella oneidensis (strain ATCC 700550 / JCM 31522 / CIP 106686 / LMG 19005 / NCIMB 14063 / MR-1).